Reading from the N-terminus, the 282-residue chain is 4-diphosphocytidyl-2-C-methyl-D-erythritol kinase (282 aa).

Residue Lys-9 is part of the active site. Residue 98–108 participates in ATP binding; sequence PMGGGLGGGSS. The active site involves Asp-140.

It belongs to the GHMP kinase family. IspE subfamily. As to quaternary structure, homodimer.

It catalyses the reaction 4-CDP-2-C-methyl-D-erythritol + ATP = 4-CDP-2-C-methyl-D-erythritol 2-phosphate + ADP + H(+). It participates in isoprenoid biosynthesis; isopentenyl diphosphate biosynthesis via DXP pathway; isopentenyl diphosphate from 1-deoxy-D-xylulose 5-phosphate: step 3/6. Functionally, catalyzes the phosphorylation of the position 2 hydroxy group of 4-diphosphocytidyl-2C-methyl-D-erythritol. In Salmonella paratyphi A (strain ATCC 9150 / SARB42), this protein is 4-diphosphocytidyl-2-C-methyl-D-erythritol kinase.